The following is a 262-amino-acid chain: Electron transfer flavoprotein beta subunit lysine methyltransferase (262 aa).

Residues 1 to 38 (MALSLGWKAHRNHCGLLLQALRSSGLLLFPCGQCPWRG) constitute a mitochondrion transit peptide.

It belongs to the methyltransferase superfamily. ETFBKMT family. In terms of assembly, interacts with HSPD1; this protein may possibly be a methylation substrate.

The protein localises to the cytoplasm. It is found in the mitochondrion matrix. The enzyme catalyses L-lysyl-[protein] + 3 S-adenosyl-L-methionine = N(6),N(6),N(6)-trimethyl-L-lysyl-[protein] + 3 S-adenosyl-L-homocysteine + 3 H(+). Protein-lysine methyltransferase that selectively trimethylates the flavoprotein ETFB in mitochondria. Thereby, may negatively regulate the function of ETFB in electron transfer from Acyl-CoA dehydrogenases to the main respiratory chain. The protein is Electron transfer flavoprotein beta subunit lysine methyltransferase of Homo sapiens (Human).